Here is a 398-residue protein sequence, read N- to C-terminus: Enoyl-[acyl-carrier-protein] reductase [NADH] (398 aa).

NAD(+) is bound by residues 48-53 (GASTGY), 74-75 (FE), 111-112 (DG), and 139-140 (LA). Substrate is bound at residue tyrosine 225. Tyrosine 235 functions as the Proton donor in the catalytic mechanism. NAD(+) contacts are provided by residues lysine 244 and 273–275 (VVT).

Belongs to the TER reductase family. As to quaternary structure, monomer.

It carries out the reaction a 2,3-saturated acyl-[ACP] + NAD(+) = a (2E)-enoyl-[ACP] + NADH + H(+). It participates in lipid metabolism; fatty acid biosynthesis. Its function is as follows. Involved in the final reduction of the elongation cycle of fatty acid synthesis (FAS II). Catalyzes the reduction of a carbon-carbon double bond in an enoyl moiety that is covalently linked to an acyl carrier protein (ACP). This Variovorax paradoxus (strain S110) protein is Enoyl-[acyl-carrier-protein] reductase [NADH].